Reading from the N-terminus, the 158-residue chain is S-ribosylhomocysteine lyase (158 aa).

Residues histidine 54, histidine 58, and cysteine 124 each contribute to the Fe cation site.

Belongs to the LuxS family. Homodimer. The cofactor is Fe cation.

It carries out the reaction S-(5-deoxy-D-ribos-5-yl)-L-homocysteine = (S)-4,5-dihydroxypentane-2,3-dione + L-homocysteine. Involved in the synthesis of autoinducer 2 (AI-2) which is secreted by bacteria and is used to communicate both the cell density and the metabolic potential of the environment. The regulation of gene expression in response to changes in cell density is called quorum sensing. Catalyzes the transformation of S-ribosylhomocysteine (RHC) to homocysteine (HC) and 4,5-dihydroxy-2,3-pentadione (DPD). In Limosilactobacillus reuteri (Lactobacillus reuteri), this protein is S-ribosylhomocysteine lyase.